The following is a 437-amino-acid chain: Nicotinate phosphoribosyltransferase (437 aa).

A Phosphohistidine; by autocatalysis modification is found at H231.

This sequence belongs to the NAPRTase family. Transiently phosphorylated on a His residue during the reaction cycle. Phosphorylation strongly increases the affinity for substrates and increases the rate of nicotinate D-ribonucleotide production. Dephosphorylation regenerates the low-affinity form of the enzyme, leading to product release.

It catalyses the reaction nicotinate + 5-phospho-alpha-D-ribose 1-diphosphate + ATP + H2O = nicotinate beta-D-ribonucleotide + ADP + phosphate + diphosphate. It functions in the pathway cofactor biosynthesis; NAD(+) biosynthesis; nicotinate D-ribonucleotide from nicotinate: step 1/1. Catalyzes the synthesis of beta-nicotinate D-ribonucleotide from nicotinate and 5-phospho-D-ribose 1-phosphate at the expense of ATP. The chain is Nicotinate phosphoribosyltransferase from Vibrio vulnificus (strain YJ016).